A 348-amino-acid chain; its full sequence is Bifunctional nitrilase/nitrile hydratase NIT4B (348 aa).

Residues 29 to 300 (VRATVVQAST…EALISADLDL (272 aa)) form the CN hydrolase domain. The active-site Proton acceptor is the E69. K156 acts as the Proton donor in catalysis. The active-site Nucleophile is C190.

It belongs to the carbon-nitrogen hydrolase superfamily. Nitrilase family. As to expression, expressed in roots, stems, cotyledons, leaves and flowers.

It carries out the reaction a nitrile + 2 H2O = a carboxylate + NH4(+). The catalysed reaction is 3-cyano-L-alanine + 2 H2O = L-aspartate + NH4(+). Its function is as follows. Highly specific for beta-cyano-L-alanine (Ala(CN)). Low activity with 3-phenylpropionitrile (PPN). Not associated with auxin production but may be involved in cyanide detoxification. This Nicotiana tabacum (Common tobacco) protein is Bifunctional nitrilase/nitrile hydratase NIT4B (NIT4B).